We begin with the raw amino-acid sequence, 142 residues long: Malate dehydrogenase, mitochondrial (142 aa).

NAD(+) contacts are provided by residues 1–6 (ASGGIG) and Asp26. 2 residues coordinate substrate: Arg73 and Arg79. Residues Asn86 and 109–111 (ITN) contribute to the NAD(+) site. Asn111 provides a ligand contact to substrate.

It belongs to the LDH/MDH superfamily. MDH type 1 family. Homodimer.

Its subcellular location is the mitochondrion matrix. The catalysed reaction is (S)-malate + NAD(+) = oxaloacetate + NADH + H(+). This is Malate dehydrogenase, mitochondrial from Schistosoma mansoni (Blood fluke).